We begin with the raw amino-acid sequence, 689 residues long: MSENTFLVEIGTEELPPKALRSLAESFAANVTAELDNAGLAHGKVEWFAAPRRLALKVANLAAAQADREVEKRGPAIAQAFDAEGKPSKAAEGWARGCGITVDQAERLTTDKGEWLLYRAHVKGESTEALLPNMIASSLAKLPIPKLMRWGASDVHFVRPVHTVTLLLGDKVIPATILGIPSDRVIRGHRFMGEPEFTIDHADQYPQILLERGKVIADYEQRKAKIKADAQEAARKIGGQADLSESLLEEVTSLVEWPVVLTAKFEEKFLAVPSEALVYTMKGDQKYFPVYDNAGKLLPNFIFVANIESKDPQQIISGNEKVVRPRLADAEFFFNTDRKKRLEDNLPRLETVLFQQQLGTLRDKTDRIQALAGWIAEQIGADVNHATRAGLLSKCDLMTNMVFEFTDTQGVMGMHYARHDGEAEDVAVALNEQYQPRFAGDALPSNPVACAVAIADKMDTLAGIFGIGQHPKGDKDPFALRRAALGVLRIIVEKNLDLDLQTLTEEAVRLYGEKLTNANVVDDVIDFMLGRFRAWYQDEGYGVDTIQAVLARRPTRPADFDARMKAVSHFRTLEESSALAAANKRVSNILAKSDETLNDIVHASVLKEAAEIKLAGNLVVLRDKLQPYFAAGRYQDALIELAALREPVDEFFENVMVNAEDKDVRINRLTLLSKLRELFLQVADISLLQ.

Belongs to the class-II aminoacyl-tRNA synthetase family. As to quaternary structure, tetramer of two alpha and two beta subunits.

The protein localises to the cytoplasm. The catalysed reaction is tRNA(Gly) + glycine + ATP = glycyl-tRNA(Gly) + AMP + diphosphate. The sequence is that of Glycine--tRNA ligase beta subunit from Klebsiella pneumoniae subsp. pneumoniae (strain ATCC 700721 / MGH 78578).